Reading from the N-terminus, the 410-residue chain is Acetate kinase (410 aa).

Asparagine 7 contacts Mg(2+). Lysine 14 serves as a coordination point for ATP. Arginine 88 serves as a coordination point for substrate. The active-site Proton donor/acceptor is aspartate 145. ATP-binding positions include 203–207, 278–280, and 326–330; these read HAGNG, DTR, and GIGEN. A Mg(2+)-binding site is contributed by glutamate 379.

This sequence belongs to the acetokinase family. As to quaternary structure, homodimer. Requires Mg(2+) as cofactor. Mn(2+) is required as a cofactor.

It is found in the cytoplasm. It catalyses the reaction acetate + ATP = acetyl phosphate + ADP. It functions in the pathway metabolic intermediate biosynthesis; acetyl-CoA biosynthesis; acetyl-CoA from acetate: step 1/2. In terms of biological role, catalyzes the formation of acetyl phosphate from acetate and ATP. Can also catalyze the reverse reaction. The chain is Acetate kinase from Aster yellows witches'-broom phytoplasma (strain AYWB).